Reading from the N-terminus, the 308-residue chain is Elongation factor Ts (308 aa).

Positions Thr80–Val83 are involved in Mg(2+) ion dislocation from EF-Tu.

The protein belongs to the EF-Ts family.

Its subcellular location is the cytoplasm. Functionally, associates with the EF-Tu.GDP complex and induces the exchange of GDP to GTP. It remains bound to the aminoacyl-tRNA.EF-Tu.GTP complex up to the GTP hydrolysis stage on the ribosome. The polypeptide is Elongation factor Ts (Methylobacterium radiotolerans (strain ATCC 27329 / DSM 1819 / JCM 2831 / NBRC 15690 / NCIMB 10815 / 0-1)).